Reading from the N-terminus, the 430-residue chain is Adenylosuccinate synthetase (430 aa).

Residues 13–19 (GDEGKGK) and 41–43 (GHT) each bind GTP. Aspartate 14 acts as the Proton acceptor in catalysis. Residues aspartate 14 and glycine 41 each coordinate Mg(2+). Residues 14–17 (DEGK), 39–42 (NAGH), threonine 130, arginine 144, glutamine 225, threonine 240, and arginine 304 contribute to the IMP site. Histidine 42 functions as the Proton donor in the catalytic mechanism. A substrate-binding site is contributed by 300-306 (STTGRAR). Residues arginine 306, 332 to 334 (KLD), and 414 to 416 (STG) each bind GTP.

The protein belongs to the adenylosuccinate synthetase family. Homodimer. The cofactor is Mg(2+).

The protein resides in the cytoplasm. It catalyses the reaction IMP + L-aspartate + GTP = N(6)-(1,2-dicarboxyethyl)-AMP + GDP + phosphate + 2 H(+). It functions in the pathway purine metabolism; AMP biosynthesis via de novo pathway; AMP from IMP: step 1/2. Functionally, plays an important role in the de novo pathway of purine nucleotide biosynthesis. Catalyzes the first committed step in the biosynthesis of AMP from IMP. This is Adenylosuccinate synthetase from Pseudomonas entomophila (strain L48).